Consider the following 178-residue polypeptide: MFPVLLLLLFFFAKETHQINVDCNELQMMGQFMCPDPARGQIDPKTQQLAGCTREGRARVWCIAANEINCTETGNATFTREVPCKWTNGYHLDTTLLLSVFLGMFGVDRFYLGYPGIGLLKFCTLGGMFLGQLIDIVLIALQVVGPADGSAYVIPYYGAGIHIVRSDNTTYRLPRDDW.

The N-terminal stretch at M1–Q18 is a signal peptide. Residues I19–S99 lie on the Extracellular side of the membrane. Residues N69 and N75 are each glycosylated (N-linked (GlcNAc...) asparagine). One can recognise a TM2 domain in the interval T94–V137. A helical transmembrane segment spans residues V100–L120. Topologically, residues K121–T124 are cytoplasmic. A helical transmembrane segment spans residues L125–G145. Topologically, residues P146–W178 are extracellular. N168 carries N-linked (GlcNAc...) asparagine glycosylation.

This sequence belongs to the TM2 family.

It localises to the membrane. Positive regulator of Notch signaling. Maternal neurogenic factor involved in Notch signaling-dependent neuroectodermal specification during early embryogenesis. Functions cooperatively with amx/TM2D3 and amrt/TM2D2. The polypeptide is TM2 domain-containing protein biscotti (Drosophila melanogaster (Fruit fly)).